Here is a 325-residue protein sequence, read N- to C-terminus: Large ribosomal subunit protein uL4m (325 aa).

The segment at 113–158 (ASTKTRYEVHGSHKKMSPQKGTGNARRGTRQSPLMKGGGKTFGPKP) is disordered.

This sequence belongs to the universal ribosomal protein uL4 family. Component of the mitochondrial large ribosomal subunit (mt-LSU). Mature N.crassa 74S mitochondrial ribosomes consist of a small (37S) and a large (54S) subunit. The 37S small subunit contains a 16S ribosomal RNA (16S mt-rRNA) and 32 different proteins. The 54S large subunit contains a 23S rRNA (23S mt-rRNA) and 42 different proteins.

The protein localises to the mitochondrion. Functionally, component of the mitochondrial ribosome (mitoribosome), a dedicated translation machinery responsible for the synthesis of mitochondrial genome-encoded proteins, including at least some of the essential transmembrane subunits of the mitochondrial respiratory chain. The mitoribosomes are attached to the mitochondrial inner membrane and translation products are cotranslationally integrated into the membrane. This Neurospora crassa (strain ATCC 24698 / 74-OR23-1A / CBS 708.71 / DSM 1257 / FGSC 987) protein is Large ribosomal subunit protein uL4m (yml6).